We begin with the raw amino-acid sequence, 209 residues long: E3 ubiquitin-protein ligase RNF138 (209 aa).

The RING-type zinc finger occupies 18–58 (CPVCQEVLKTPVRTAACQHVFCRKCFLTAMRESGIHCPLCR). Zn(2+)-binding residues include cysteine 86, cysteine 89, histidine 101, and cysteine 105. The segment at 86-105 (CRCCSKKIKFYRMRHHYKSC) adopts a C2HC RNF-type zinc-finger fold. The segment at 125 to 154 (QDSVRSSNRSETSASDNTETYQEDTSSSGH) is disordered. A Phosphothreonine modification is found at threonine 142. The C2H2-type zinc finger occupies 157–180 (FKCPLCQESNFTRQRLLDHCNSNH). The region spanning 189–207 (LQLDEETQYQTAVEESFQV) is the UIM domain.

In terms of assembly, interacts with NLK. Interacts with XRCC5/Ku80. Interacts with RBBP8/CtIP. In terms of processing, auto-ubiquitinated.

The protein resides in the chromosome. It carries out the reaction S-ubiquitinyl-[E2 ubiquitin-conjugating enzyme]-L-cysteine + [acceptor protein]-L-lysine = [E2 ubiquitin-conjugating enzyme]-L-cysteine + N(6)-ubiquitinyl-[acceptor protein]-L-lysine.. It participates in protein modification; protein ubiquitination. Its function is as follows. E3 ubiquitin-protein ligase involved in DNA damage response by promoting DNA resection and homologous recombination. Recruited to sites of double-strand breaks following DNA damage and specifically promotes double-strand break repair via homologous recombination. Two different, non-exclusive, mechanisms have been proposed. According to a report, regulates the choice of double-strand break repair by favoring homologous recombination over non-homologous end joining (NHEJ): acts by mediating ubiquitination of XRCC5/Ku80, leading to remove the Ku complex from DNA breaks, thereby promoting homologous recombination. According to another report, cooperates with UBE2Ds E2 ubiquitin ligases (UBE2D1, UBE2D2, UBE2D3 or UBE2D4) to promote homologous recombination by mediating ubiquitination of RBBP8/CtIP. Together with NLK, involved in the ubiquitination and degradation of TCF/LEF. Also exhibits auto-ubiquitination activity in combination with UBE2K. May act as a negative regulator in the Wnt/beta-catenin-mediated signaling pathway. The protein is E3 ubiquitin-protein ligase RNF138 of Rattus norvegicus (Rat).